Consider the following 192-residue polypeptide: Protein GrpE (192 aa).

The interval 1–43 (MSKEEFPHEKDLKDEVTPDKAPKKDPKAASKEEVKEDPAKDYE) is disordered.

This sequence belongs to the GrpE family. As to quaternary structure, homodimer.

It is found in the cytoplasm. Functionally, participates actively in the response to hyperosmotic and heat shock by preventing the aggregation of stress-denatured proteins, in association with DnaK and GrpE. It is the nucleotide exchange factor for DnaK and may function as a thermosensor. Unfolded proteins bind initially to DnaJ; upon interaction with the DnaJ-bound protein, DnaK hydrolyzes its bound ATP, resulting in the formation of a stable complex. GrpE releases ADP from DnaK; ATP binding to DnaK triggers the release of the substrate protein, thus completing the reaction cycle. Several rounds of ATP-dependent interactions between DnaJ, DnaK and GrpE are required for fully efficient folding. This Lactobacillus gasseri (strain ATCC 33323 / DSM 20243 / BCRC 14619 / CIP 102991 / JCM 1131 / KCTC 3163 / NCIMB 11718 / NCTC 13722 / AM63) protein is Protein GrpE.